The primary structure comprises 362 residues: Sulfate/thiosulfate import ATP-binding protein CysA (362 aa).

In terms of domain architecture, ABC transporter spans 13-243 (ITVRDAYKRY…PTNAFVMSFL (231 aa)). Position 45–52 (45–52 (GPSGSGKS)) interacts with ATP.

The protein belongs to the ABC transporter superfamily. Sulfate/tungstate importer (TC 3.A.1.6) family. The complex is composed of two ATP-binding proteins (CysA), two transmembrane proteins (CysT and CysW) and a solute-binding protein (CysP).

The protein localises to the cell membrane. It catalyses the reaction sulfate(out) + ATP + H2O = sulfate(in) + ADP + phosphate + H(+). The enzyme catalyses thiosulfate(out) + ATP + H2O = thiosulfate(in) + ADP + phosphate + H(+). In terms of biological role, part of the ABC transporter complex CysAWTP involved in sulfate/thiosulfate import. Responsible for energy coupling to the transport system. The sequence is that of Sulfate/thiosulfate import ATP-binding protein CysA from Mycolicibacterium paratuberculosis (strain ATCC BAA-968 / K-10) (Mycobacterium paratuberculosis).